Reading from the N-terminus, the 601-residue chain is FAD-binding monooxygenase stcW (601 aa).

FAD contacts are provided by residues 42-43, Glu-64, Trp-73, Asp-84, Tyr-90, and Val-133; that span reads FS.

The protein belongs to the FAD-binding monooxygenase family. FAD serves as cofactor.

Its pathway is mycotoxin biosynthesis; sterigmatocystin biosynthesis. Its function is as follows. FAD-binding monooxygenase; part of the gene cluster that mediates the biosynthesis of sterigmatocystin (ST), a polyketide-derived furanocoumarin which is part of the most toxic and carcinogenic compounds among the known mycotoxins. The first step in the biosynthesis of sterigmatocystin is the production of hexanoate by the fatty acid synthase (FAS) units stcJ and stcK. The polyketide backbone is assembled by the non-reducing polyketide synthase stcA by condensation of the starter hexanoyl-CoA and 7 malonyl-CoA extender units followed by cyclization and release of norsolorinic acid. Norsolorinic acid is the first stable intermediate in the biosynthesis of sterigmatocystin and is converted into averantin (AVN) by the ketoreductase stcE which reduces the hexanoate ketone to an alcohol. Averantin is then oxidized into 5'-hydroxyaverantin (HAVN) by the cytochrome P450 monooxygenase stcF. 5'-hydroxyaverantin is further converted to 5'-oxyaverantin (OAVN) by the 5'-hydroxyaverantin dehydrogenase stcG. The next step is the conversion of OAVN into averufin (AVF) which is catalyzed by a yet to be identified enzyme. The cytochrome P450 monooxygenase stcB and the flavin-binding monooxygenase stcW are both required for the conversion of averufin to 1-hydroxyversicolorone. The esterase stcI probably catalyzes the formation of versiconal hemiacetal acetate from 1-hydroxyversicolorone. The oxydoreductase stcN then probably catalyzes the biosynthetic step from versiconal to versicolorin B (VERB). The next step is performed by the versicolorin B desaturase stcL to produce versicolorin A (VERA). The ketoreductase stcU and the cytochrome P450 monooxygenase stcS are involved in the conversion of versicolorin A to demethylsterigmatocystin. The Baeyer-Villiger oxidas stcQ and the reductase stcR might be involved in the biosynthetic step from versicolorin A to demethylsterigmatocystin. The final step in the biosynthesis of sterigmatocystin is the methylation of demethylsterigmatocystin catalyzed by the methyltransferase stcP. The polypeptide is FAD-binding monooxygenase stcW (Emericella nidulans (strain FGSC A4 / ATCC 38163 / CBS 112.46 / NRRL 194 / M139) (Aspergillus nidulans)).